Reading from the N-terminus, the 426-residue chain is Spermidine/putrescine import ATP-binding protein PotA (426 aa).

The 233-residue stretch at 6–238 folds into the ABC transporter domain; the sequence is IEFKNVSKTY…PINHFVADFI (233 aa). An ATP-binding site is contributed by 40-47; it reads GASGSGKS.

The protein belongs to the ABC transporter superfamily. Spermidine/putrescine importer (TC 3.A.1.11.1) family. In terms of assembly, the complex is composed of two ATP-binding proteins (PotA), two transmembrane proteins (PotB and PotC) and a solute-binding protein (PotD).

It localises to the cell membrane. The enzyme catalyses ATP + H2O + polyamine-[polyamine-binding protein]Side 1 = ADP + phosphate + polyamineSide 2 + [polyamine-binding protein]Side 1.. Functionally, part of the ABC transporter complex PotABCD involved in spermidine/putrescine import. Responsible for energy coupling to the transport system. The chain is Spermidine/putrescine import ATP-binding protein PotA from Lactococcus lactis subsp. cremoris (strain SK11).